A 305-amino-acid chain; its full sequence is GPI-anchored hemophore cfmA (305 aa).

The N-terminal stretch at 1-18 is a signal peptide; the sequence is MKASVSLLLLSAASMASA. Positions 19 to 111 constitute a CFEM domain; it reads AMSVSQCAQM…GSGSGSDSGS (93 aa). Cystine bridges form between C25-C68, C29-C63, C42-C49, and C51-C84. A heme-binding site is contributed by D46. The tract at residues 92–287 is disordered; the sequence is TATGAGGSSS…STGNVAPRGA (196 aa). Residues 95–149 are compositionally biased toward gly residues; that stretch reads GAGGSSSGSGSGSDSGSGSGSGSGSGSGSGSGSGSSSGSGSGSGSGSGSGSGSNS. Composition is skewed to low complexity over residues 150-186, 196-259, and 267-287; these read GSGS…NSTT, GASS…TATG, and GSAS…PRGA. N183, N203, N237, N243, and N275 each carry an N-linked (GlcNAc...) asparagine glycan. The GPI-like-anchor amidated serine moiety is linked to residue S276. Positions 277–305 are cleaved as a propeptide — removed in mature form; it reads SSTGNVAPRGAVVGSGAVGALALAALIIL.

It belongs to the RBT5 family. The GPI-like anchor contains a phosphoceramide lipid group. In terms of processing, the GPI-anchor is attached to the protein in the endoplasmic reticulum and serves to target the protein to the cell surface. There, the glucosamine-inositol phospholipid moiety is cleaved off and the GPI-modified mannoprotein is covalently attached via its lipidless GPI glycan remnant to the 1,6-beta-glucan of the outer cell wall layer.

Its subcellular location is the secreted. The protein resides in the cell wall. It localises to the cell membrane. GPI-anchored cell wall protein involved in stabilizing the cell wall. Not implicated in virulence, heme uptake and biofilm formation. The chain is GPI-anchored hemophore cfmA from Aspergillus fumigatus (strain ATCC MYA-4609 / CBS 101355 / FGSC A1100 / Af293) (Neosartorya fumigata).